The sequence spans 687 residues: Polyphosphate kinase (687 aa).

Asparagine 45 is an ATP binding site. Positions 375 and 405 each coordinate Mg(2+). Histidine 435 (phosphohistidine intermediate) is an active-site residue. Residues tyrosine 472, arginine 568, and histidine 596 each coordinate ATP.

This sequence belongs to the polyphosphate kinase 1 (PPK1) family. Mg(2+) serves as cofactor. Post-translationally, an intermediate of this reaction is the autophosphorylated ppk in which a phosphate is covalently linked to a histidine residue through a N-P bond.

The catalysed reaction is [phosphate](n) + ATP = [phosphate](n+1) + ADP. Its function is as follows. Catalyzes the reversible transfer of the terminal phosphate of ATP to form a long-chain polyphosphate (polyP). The sequence is that of Polyphosphate kinase from Burkholderia cenocepacia (strain HI2424).